The primary structure comprises 208 residues: N-(5'-phosphoribosyl)anthranilate isomerase (208 aa).

This sequence belongs to the TrpF family.

The enzyme catalyses N-(5-phospho-beta-D-ribosyl)anthranilate = 1-(2-carboxyphenylamino)-1-deoxy-D-ribulose 5-phosphate. It participates in amino-acid biosynthesis; L-tryptophan biosynthesis; L-tryptophan from chorismate: step 3/5. This chain is N-(5'-phosphoribosyl)anthranilate isomerase, found in Neisseria gonorrhoeae (strain ATCC 700825 / FA 1090).